The following is a 486-amino-acid chain: Protein ZINC INDUCED FACILITATOR 1 (486 aa).

Transmembrane regions (helical) follow at residues 41–61, 82–102, 109–129, 131–151, 170–190, 212–232, 288–308, 327–347, 362–384, 391–408, 423–443, and 461–481; these read FVWIIVLSTSLPISSLYPFLY, FVGCSFMLGRALTSVFWGIVA, PIILLGTISIAIFNALFGLSS, FWMAIGTRFLLGSFNCLLGTM, AVSTAWGIGLIIGPALGGFLA, ALPCFTISAFALLVTVLCCFI, IIVYCVLCLHDTAYSEIFALW, TVLAISGLGLFSFQVFVYPLA, ALMIPIQMSYPFIAGLSGLSLSL, ILINVLSVSAITGLLILQ, IAMTAMSLFKTVGPAGAGILF, and VFFVLNVIVVVGVALTFKPFL.

It belongs to the major facilitator superfamily. As to expression, strongly expressed in developing leaves, differentiating zones of root tips and sepals of developing flowers. Restricted to vascular tissues in older leaves, mature roots, flowers, anthers and filaments. Not expressed in developing anthers.

Its subcellular location is the vacuole membrane. Major facilitator superfamily (MFS) transporter involved in zinc tolerance by participating in vacuolar sequestration of zinc. The polypeptide is Protein ZINC INDUCED FACILITATOR 1 (ZIF1) (Arabidopsis thaliana (Mouse-ear cress)).